The following is a 249-amino-acid chain: UDP-N-acetyl-D-mannosaminuronic acid transferase (249 aa).

Belongs to the glycosyltransferase 26 family.

The catalysed reaction is UDP-N-acetyl-alpha-D-mannosaminouronate + N-acetyl-alpha-D-glucosaminyl-di-trans,octa-cis-undecaprenyl diphosphate = beta-D-ManNAcA-(1-&gt;4)-alpha-D-GlcNAc-di-trans,octa-cis-undecaprenyl diphosphate + UDP + H(+). It functions in the pathway bacterial outer membrane biogenesis; enterobacterial common antigen biosynthesis. Functionally, catalyzes the synthesis of Und-PP-GlcNAc-ManNAcA (Lipid II), the second lipid-linked intermediate involved in enterobacterial common antigen (ECA) synthesis. This chain is UDP-N-acetyl-D-mannosaminuronic acid transferase, found in Pectobacterium carotovorum subsp. carotovorum (strain PC1).